The primary structure comprises 395 residues: Flap endonuclease 1 (395 aa).

Residues 1–108 (MGILGLSKLL…DELEMRRQKA (108 aa)) are N-domain. Position 34 (Asp34) interacts with Mg(2+). DNA is bound at residue Arg74. Position 90 (Asp90) interacts with Mg(2+). A disordered region spans residues 116–136 (EKAKDAGDDEMMEKMSKRTVR). The interval 126-257 (MMEKMSKRTV…QKAWEGIQRY (132 aa)) is I-domain. Mg(2+)-binding residues include Glu162, Glu164, Asp183, and Asp185. Residue Glu162 coordinates DNA. Residues Gly235 and Asp237 each coordinate DNA. Asp237 serves as a coordination point for Mg(2+). The tract at residues 340-348 (TQGRLDSFF) is interaction with PCNA.

Belongs to the XPG/RAD2 endonuclease family. FEN1 subfamily. As to quaternary structure, interacts with PCNA. Three molecules of FEN1 bind to one PCNA trimer with each molecule binding to one PCNA monomer. PCNA stimulates the nuclease activity without altering cleavage specificity. Mg(2+) serves as cofactor. In terms of processing, phosphorylated. Phosphorylation upon DNA damage induces relocalization to the nuclear plasma.

The protein resides in the nucleus. Its subcellular location is the nucleolus. It localises to the nucleoplasm. It is found in the mitochondrion. Structure-specific nuclease with 5'-flap endonuclease and 5'-3' exonuclease activities involved in DNA replication and repair. During DNA replication, cleaves the 5'-overhanging flap structure that is generated by displacement synthesis when DNA polymerase encounters the 5'-end of a downstream Okazaki fragment. It enters the flap from the 5'-end and then tracks to cleave the flap base, leaving a nick for ligation. Also involved in the long patch base excision repair (LP-BER) pathway, by cleaving within the apurinic/apyrimidinic (AP) site-terminated flap. Acts as a genome stabilization factor that prevents flaps from equilibrating into structures that lead to duplications and deletions. Also possesses 5'-3' exonuclease activity on nicked or gapped double-stranded DNA, and exhibits RNase H activity. Also involved in replication and repair of rDNA and in repairing mitochondrial DNA. This chain is Flap endonuclease 1, found in Leishmania major.